The primary structure comprises 421 residues: Testin (421 aa).

The PET domain maps to 92-199; that stretch reads MILTNPVAAK…GDVKLPCEMD (108 aa). Positions 133-164 are disordered; sequence EKQPVAGSEGAQYRKKQLAKQLPAHDQDPSKC. Basic and acidic residues predominate over residues 155–164; it reads PAHDQDPSKC. LIM zinc-binding domains are found at residues 234–297, 299–359, and 362–421; these read YSCY…CDSE, PRCA…NHAV, and QGCH…KMMS.

This sequence belongs to the prickle / espinas / testin family. Interacts via LIM domain 1 with ZYX. Interacts (via LIM domain 3) with ENAH and VASP. Interacts with ALKBH4, talin, actin, alpha-actinin, GRIP1 and PXN. Interacts (via LIM domain 2) with ACTL7A (via N-terminus). Heterodimer with ACTL7A; the heterodimer interacts with ENAH to form a heterotrimer.

It localises to the cytoplasm. The protein resides in the cell junction. Its subcellular location is the focal adhesion. In terms of biological role, scaffold protein that may play a role in cell adhesion, cell spreading and in the reorganization of the actin cytoskeleton. Plays a role in the regulation of cell proliferation. May act as a tumor suppressor. This is Testin (TES) from Ateles geoffroyi (Black-handed spider monkey).